The sequence spans 145 residues: D-aminoacyl-tRNA deacylase (145 aa).

The Gly-cisPro motif, important for rejection of L-amino acids signature appears at 137-138 (GP).

This sequence belongs to the DTD family. As to quaternary structure, homodimer.

The protein localises to the cytoplasm. The enzyme catalyses glycyl-tRNA(Ala) + H2O = tRNA(Ala) + glycine + H(+). It catalyses the reaction a D-aminoacyl-tRNA + H2O = a tRNA + a D-alpha-amino acid + H(+). Functionally, an aminoacyl-tRNA editing enzyme that deacylates mischarged D-aminoacyl-tRNAs. Also deacylates mischarged glycyl-tRNA(Ala), protecting cells against glycine mischarging by AlaRS. Acts via tRNA-based rather than protein-based catalysis; rejects L-amino acids rather than detecting D-amino acids in the active site. By recycling D-aminoacyl-tRNA to D-amino acids and free tRNA molecules, this enzyme counteracts the toxicity associated with the formation of D-aminoacyl-tRNA entities in vivo and helps enforce protein L-homochirality. In Pseudomonas putida (strain ATCC 47054 / DSM 6125 / CFBP 8728 / NCIMB 11950 / KT2440), this protein is D-aminoacyl-tRNA deacylase.